The chain runs to 120 residues: Prefoldin subunit beta (120 aa).

The protein belongs to the prefoldin subunit beta family. As to quaternary structure, heterohexamer of two alpha and four beta subunits.

It localises to the cytoplasm. In terms of biological role, molecular chaperone capable of stabilizing a range of proteins. Seems to fulfill an ATP-independent, HSP70-like function in archaeal de novo protein folding. The chain is Prefoldin subunit beta from Methanothrix thermoacetophila (strain DSM 6194 / JCM 14653 / NBRC 101360 / PT) (Methanosaeta thermophila).